A 184-amino-acid chain; its full sequence is uncharacterized protein (184 aa).

The chain crosses the membrane as a helical span at residues 35–55 (LSFLIYILYTFSISGLSTFVI).

It localises to the membrane. This is an uncharacterized protein from Schizosaccharomyces pombe (strain 972 / ATCC 24843) (Fission yeast).